The sequence spans 282 residues: Nucleotide-binding protein XAC2976 (282 aa).

Residue 5–12 (GLSGSGKS) participates in ATP binding. A GTP-binding site is contributed by 57-60 (DVRS).

This sequence belongs to the RapZ-like family.

Functionally, displays ATPase and GTPase activities. This Xanthomonas axonopodis pv. citri (strain 306) protein is Nucleotide-binding protein XAC2976.